The primary structure comprises 179 residues: MPTPEKARQIEEISEILRTASLAILTDYRGLSVADMTAFRRRLQEQQANFRVVKNTLTRIAAERTGTEVITPLLEGPTALVYSMGDPVAAAKLTLEFARQSRILSVKGGLLAGRLLSAADVEALATLPPREELLAKVVGGLQAPLYGLVSVLSGPIRGLLYVLQARVRQLGGEEAAEAA.

This sequence belongs to the universal ribosomal protein uL10 family. As to quaternary structure, part of the ribosomal stalk of the 50S ribosomal subunit. The N-terminus interacts with L11 and the large rRNA to form the base of the stalk. The C-terminus forms an elongated spine to which L12 dimers bind in a sequential fashion forming a multimeric L10(L12)X complex.

Forms part of the ribosomal stalk, playing a central role in the interaction of the ribosome with GTP-bound translation factors. In Thermomicrobium roseum (strain ATCC 27502 / DSM 5159 / P-2), this protein is Large ribosomal subunit protein uL10.